The primary structure comprises 1266 residues: 5-oxoprolinase 1 (1266 aa).

It belongs to the oxoprolinase family. In terms of tissue distribution, expressed in roots, stems, leaves, flowers and siliques.

Its subcellular location is the cytoplasm. The enzyme catalyses 5-oxo-L-proline + ATP + 2 H2O = L-glutamate + ADP + phosphate + H(+). Its function is as follows. Catalyzes the cleavage of 5-oxo-L-proline to form L-glutamate coupled to the hydrolysis of ATP to ADP and inorganic phosphate. Acts in the glutathione degradation pathway. In Arabidopsis thaliana (Mouse-ear cress), this protein is 5-oxoprolinase 1.